A 211-amino-acid polypeptide reads, in one-letter code: Large ribosomal subunit protein uL4 (211 aa).

Residues 41–52 (QTNARQGTASTK) show a composition bias toward polar residues. The interval 41-78 (QTNARQGTASTKTRAEVRGGGRKPWRQKGTGRARAGSI) is disordered. Residues 60-71 (GGRKPWRQKGTG) show a composition bias toward basic residues.

The protein belongs to the universal ribosomal protein uL4 family. Part of the 50S ribosomal subunit.

Its function is as follows. One of the primary rRNA binding proteins, this protein initially binds near the 5'-end of the 23S rRNA. It is important during the early stages of 50S assembly. It makes multiple contacts with different domains of the 23S rRNA in the assembled 50S subunit and ribosome. In terms of biological role, forms part of the polypeptide exit tunnel. In Rippkaea orientalis (strain PCC 8801 / RF-1) (Cyanothece sp. (strain PCC 8801)), this protein is Large ribosomal subunit protein uL4.